Here is a 145-residue protein sequence, read N- to C-terminus: Protein SprT-like (145 aa).

The 137-residue stretch at 4 to 140 (TNYVQEVSLA…VCGNCHGKLM (137 aa)) folds into the SprT-like domain. H64 lines the Zn(2+) pocket. E65 is a catalytic residue. H68 serves as a coordination point for Zn(2+).

It belongs to the SprT family. The cofactor is Zn(2+).

The protein resides in the cytoplasm. In Streptococcus pyogenes serotype M1, this protein is Protein SprT-like.